A 109-amino-acid chain; its full sequence is Large ribosomal subunit protein uL24 (109 aa).

The protein belongs to the universal ribosomal protein uL24 family. In terms of assembly, part of the 50S ribosomal subunit.

In terms of biological role, one of two assembly initiator proteins, it binds directly to the 5'-end of the 23S rRNA, where it nucleates assembly of the 50S subunit. Functionally, one of the proteins that surrounds the polypeptide exit tunnel on the outside of the subunit. The sequence is that of Large ribosomal subunit protein uL24 from Rickettsia canadensis (strain McKiel).